We begin with the raw amino-acid sequence, 289 residues long: D-xylonolactone lactonase (289 aa).

E17 provides a ligand contact to Fe(2+). The D-xylono-1,5-lactone site is built by R98, N100, E119, and N145. Residues N145 and D195 each coordinate Fe(2+). D195 (proton donor/acceptor) is an active-site residue.

Belongs to the SMP-30/CGR1 family. It depends on Fe(2+) as a cofactor.

It carries out the reaction D-xylono-1,5-lactone + H2O = D-xylonate + H(+). Functionally, involved in the degradation of D-xylose. Catalyzes the hydrolysis of D-xylonolactone to D-xylonate. This is D-xylonolactone lactonase from Caulobacter vibrioides (strain ATCC 19089 / CIP 103742 / CB 15) (Caulobacter crescentus).